The following is a 520-amino-acid chain: Cholesterol side-chain cleavage enzyme, mitochondrial (520 aa).

The N-terminal 39 residues, 1–39 (MLARGLPLRSALVKACPPILSTVGEGWGHHRVGTGEGAG), are a transit peptide targeting the mitochondrion. C461 provides a ligand contact to heme.

This sequence belongs to the cytochrome P450 family. In terms of assembly, interacts with FDX1/adrenodoxin. The cofactor is heme. Detected in adrenal cortex and corpus luteum (at protein level).

It is found in the mitochondrion inner membrane. The enzyme catalyses 6 reduced [adrenodoxin] + cholesterol + 3 O2 + 6 H(+) = 4-methylpentanal + pregnenolone + 6 oxidized [adrenodoxin] + 4 H2O. The catalysed reaction is 2 reduced [adrenodoxin] + cholesterol + O2 + 2 H(+) = (22R)-hydroxycholesterol + 2 oxidized [adrenodoxin] + H2O. It carries out the reaction (22R)-hydroxycholesterol + 2 reduced [adrenodoxin] + O2 + 2 H(+) = (20R,22R)-20,22-dihydroxycholesterol + 2 oxidized [adrenodoxin] + H2O. It catalyses the reaction (20R,22R)-20,22-dihydroxycholesterol + 2 reduced [adrenodoxin] + O2 + 2 H(+) = 4-methylpentanal + pregnenolone + 2 oxidized [adrenodoxin] + 2 H2O. It participates in lipid metabolism; C21-steroid hormone metabolism. Its pathway is steroid metabolism; cholesterol metabolism. In terms of biological role, a cytochrome P450 monooxygenase that catalyzes the side-chain hydroxylation and cleavage of cholesterol to pregnenolone, the precursor of most steroid hormones. Catalyzes three sequential oxidation reactions of cholesterol, namely the hydroxylation at C22 followed with the hydroxylation at C20 to yield 20R,22R-hydroxycholesterol that is further cleaved between C20 and C22 to yield the C21-steroid pregnenolone and 4-methylpentanal. Mechanistically, uses molecular oxygen inserting one oxygen atom into a substrate and reducing the second into a water molecule. Two electrons are provided by NADPH via a two-protein mitochondrial transfer system comprising flavoprotein FDXR (adrenodoxin/ferredoxin reductase) and nonheme iron-sulfur protein FDX1 or FDX2 (adrenodoxin/ferredoxin). This Bos taurus (Bovine) protein is Cholesterol side-chain cleavage enzyme, mitochondrial (CYP11A1).